We begin with the raw amino-acid sequence, 78 residues long: UPF0335 protein RrIowa_0193 (78 aa).

The protein belongs to the UPF0335 family.

The protein is UPF0335 protein RrIowa_0193 of Rickettsia rickettsii (strain Iowa).